A 618-amino-acid chain; its full sequence is Leucine aminopeptidase 2 (618 aa).

Residues 139–141 and 271–276 each bind a peptide; these read QCQ and PYGGME. His300 is a Zn(2+) binding site. Catalysis depends on Glu301, which acts as the Proton acceptor. Zn(2+)-binding residues include His304 and Glu323. Tyr388 acts as the Proton donor in catalysis.

The protein belongs to the peptidase M1 family. Requires Zn(2+) as cofactor.

Its subcellular location is the cytoplasm. The protein localises to the nucleus. The catalysed reaction is an epoxide + H2O = an ethanediol. Functionally, aminopeptidase that preferentially cleaves di- and tripeptides. Also has low epoxide hydrolase activity (in vitro). Can hydrolyze the epoxide leukotriene LTA(4) but it forms preferentially 5,6-dihydroxy-7,9,11,14-eicosatetraenoic acid rather than the cytokine leukotriene B(4) as the product compared to the homologous mammalian enzyme (in vitro). The polypeptide is Leucine aminopeptidase 2 (Aspergillus niger (strain ATCC MYA-4892 / CBS 513.88 / FGSC A1513)).